The following is a 228-amino-acid chain: Urease accessory protein UreF (228 aa).

Belongs to the UreF family. As to quaternary structure, ureD, UreF and UreG form a complex that acts as a GTP-hydrolysis-dependent molecular chaperone, activating the urease apoprotein by helping to assemble the nickel containing metallocenter of UreC. The UreE protein probably delivers the nickel.

The protein resides in the cytoplasm. In terms of biological role, required for maturation of urease via the functional incorporation of the urease nickel metallocenter. This chain is Urease accessory protein UreF, found in Prochlorococcus marinus (strain MIT 9301).